The chain runs to 403 residues: Argininosuccinate synthase (403 aa).

Residues 12-20 (AYSGGLDTS) and Ala-39 contribute to the ATP site. Tyr-91 contacts L-citrulline. Residue Gly-121 coordinates ATP. L-aspartate is bound by residues Thr-123, Asn-127, and Asp-128. L-citrulline is bound at residue Asn-127. L-citrulline-binding residues include Arg-131, Ser-180, Ser-189, Glu-265, and Tyr-277.

The protein belongs to the argininosuccinate synthase family. Type 1 subfamily. Homotetramer.

The protein resides in the cytoplasm. The catalysed reaction is L-citrulline + L-aspartate + ATP = 2-(N(omega)-L-arginino)succinate + AMP + diphosphate + H(+). It participates in amino-acid biosynthesis; L-arginine biosynthesis; L-arginine from L-ornithine and carbamoyl phosphate: step 2/3. In Buchnera aphidicola subsp. Acyrthosiphon pisum (strain 5A), this protein is Argininosuccinate synthase.